Reading from the N-terminus, the 521-residue chain is Riboflavin transporter MCH5 (521 aa).

2 disordered regions span residues M1–Y33 and N65–I96. Over M1–G103 the chain is Cytoplasmic. The helical transmembrane segment at F104–L124 threads the bilayer. Residue N125 is glycosylated (N-linked (GlcNAc...) asparagine). Residues N125–S143 are Extracellular-facing. Residues V144–I164 traverse the membrane as a helical segment. Residues S165–N172 are Cytoplasmic-facing. The chain crosses the membrane as a helical span at residues G173–A193. N194 carries N-linked (GlcNAc...) asparagine glycosylation. Residues N194 to H200 lie on the Extracellular side of the membrane. A helical membrane pass occupies residues F201–V221. Residues S222–G233 lie on the Cytoplasmic side of the membrane. Residues T234–L254 form a helical membrane-spanning segment. At R255–G269 the chain is on the extracellular side. The helical transmembrane segment at F270–I290 threads the bilayer. Over L291 to K325 the chain is Cytoplasmic. Residues A326 to I346 traverse the membrane as a helical segment. The Extracellular portion of the chain corresponds to N347–A367. The chain crosses the membrane as a helical span at residues Y368–L388. Over S389–N396 the chain is Cytoplasmic. Residues V397–G417 traverse the membrane as a helical segment. Residues T418–N422 are Extracellular-facing. Residue N419 is glycosylated (N-linked (GlcNAc...) asparagine). Residues M423–V443 form a helical membrane-spanning segment. The Cytoplasmic segment spans residues C444–M461. The chain crosses the membrane as a helical span at residues Y462 to I482. At K483–D487 the chain is on the extracellular side. A helical membrane pass occupies residues Y488–I508. The Cytoplasmic portion of the chain corresponds to S509 to F521.

Belongs to the major facilitator superfamily. Monocarboxylate porter (TC 2.A.1.13) family.

It localises to the cell membrane. Riboflavin transporter involved in riboflavin (vitamin B2) uptake. Does not act in the transport of monocarboxylic acids across the plasma membrane. In Saccharomyces cerevisiae (strain ATCC 204508 / S288c) (Baker's yeast), this protein is Riboflavin transporter MCH5 (MCH5).